The primary structure comprises 293 residues: Pyridoxal 5'-phosphate synthase subunit PdxS (293 aa).

Asp23 lines the D-ribose 5-phosphate pocket. Catalysis depends on Lys80, which acts as the Schiff-base intermediate with D-ribose 5-phosphate. Gly152 lines the D-ribose 5-phosphate pocket. Arg164 lines the D-glyceraldehyde 3-phosphate pocket. D-ribose 5-phosphate contacts are provided by residues Gly213 and 234–235; that span reads GS.

This sequence belongs to the PdxS/SNZ family. In the presence of PdxT, forms a dodecamer of heterodimers.

It catalyses the reaction aldehydo-D-ribose 5-phosphate + D-glyceraldehyde 3-phosphate + L-glutamine = pyridoxal 5'-phosphate + L-glutamate + phosphate + 3 H2O + H(+). Its pathway is cofactor biosynthesis; pyridoxal 5'-phosphate biosynthesis. In terms of biological role, catalyzes the formation of pyridoxal 5'-phosphate from ribose 5-phosphate (RBP), glyceraldehyde 3-phosphate (G3P) and ammonia. The ammonia is provided by the PdxT subunit. Can also use ribulose 5-phosphate and dihydroxyacetone phosphate as substrates, resulting from enzyme-catalyzed isomerization of RBP and G3P, respectively. The chain is Pyridoxal 5'-phosphate synthase subunit PdxS from Syntrophus aciditrophicus (strain SB).